Here is a 1373-residue protein sequence, read N- to C-terminus: Capping protein, Arp2/3 and myosin-I linker protein 3 (1373 aa).

Positions 126–151 are disordered; sequence RGNADTPEGPRDTSPNSETSTSTTHS. A compositionally biased stretch (low complexity) spans 138-151; that stretch reads TSPNSETSTSTTHS. LRR repeat units lie at residues 242 to 269, 272 to 299, 333 to 358, 390 to 417, 422 to 446, 453 to 475, 480 to 507, 510 to 536, 541 to 564, and 568 to 591; these read SGSL…VFGE, SCVL…QLLC, ASSL…ALYS, CSHL…AFKQ, AYTL…LLQG, LSDL…ALQE, VTCI…LGKN, LKHL…LVQL, DCSL…LINA, and NTCL…MLSK. Disordered regions lie at residues 864-902 and 970-1373; these read RTLS…TNID and LRHQ…PGTD. Positions 981-997 are enriched in pro residues; the sequence is PRTTPPGPGRPSVPVPG. Positions 1007–1022 are enriched in basic and acidic residues; the sequence is RLDEGLEDFFSRRVMD. A compositionally biased stretch (basic residues) spans 1047–1062; that stretch reads QKRRRRGLFHFRRPRS. Residues 1078-1097 are compositionally biased toward pro residues; the sequence is LPPPPPPPPTQESPPSPDPP. Residues 1098–1108 show a composition bias toward low complexity; it reads SLGNNSSPCWS. Over residues 1218 to 1228 the composition is skewed to basic and acidic residues; that stretch reads RRAEATWHIAE. A compositionally biased stretch (polar residues) spans 1232–1243; it reads PNHSCQSPSPAS. Residues 1269–1278 are compositionally biased toward pro residues; the sequence is PIGPRPPKPV. Positions 1345 to 1358 are enriched in basic and acidic residues; that stretch reads QSCDKLEPDRRRPP.

It belongs to the CARMIL family. In terms of tissue distribution, widely expressed, with much higher levels in fetal tissues than in adult ones. Highly expressed in newborn brain.

Its subcellular location is the cytoplasm. It localises to the cell membrane. This is Capping protein, Arp2/3 and myosin-I linker protein 3 (Carmil3) from Rattus norvegicus (Rat).